Here is a 366-residue protein sequence, read N- to C-terminus: MKVGVHKLAMSAPGDVSELAALIETGAVNPREIVALVGKTEGNGGANDFTRGLATLSYQLLLARHLGLSPEEVGQRIAFVWSGGTEGVLSPHATLFTRAPDDGPMPAEPRLALGIGITRDIAPEEVGTTAMVEAVAGAVHTALAEAGITEPADVHYVQVKGPLLTPATIADADRRGARLVTRDPNGSKPYARGAMALGVALGLGEVAAERITPDMIACDMEVFSAVASTSAGGELTKCEVLLFGNAPGATSAFRIGHGVLKDAIDVAGVKEALRSAGLSFHGTPSEEQAHEIVAVFAKAEAPVNGRLRGRRTTMLSDADIHYERHARAAVGAVIASVTGDPAIFVSGGTEHQCAPGAAPIAAIVRA.

The tract at residues 1–103 is RU A; that stretch reads MKVGVHKLAM…TLFTRAPDDG (103 aa). Substrate is bound by residues Arg-51 and 82–83; that span reads SG. The interval 110–247 is RU B; it reads RLALGIGITR…CEVLLFGNAP (138 aa). The active site involves Lys-160. Substrate-binding positions include Arg-192, 230 to 231, Arg-327, and 346 to 347; these read SA and SG. Ser-230 acts as the Nucleophile in catalysis. The tract at residues 253 to 366 is RU C; that stretch reads FRIGHGVLKD…AAPIAAIVRA (114 aa).

Belongs to the cyclic amide hydrolase (CyAH) family. As to quaternary structure, homotetramer.

Its function is as follows. Cyclic amide hydrolase of unknown substrate specificity. Catalyzes the hydrolytic ring-opening of a cyclic amide. Does not act on cyanuric acid nor barbituric acid. In Azorhizobium caulinodans (strain ATCC 43989 / DSM 5975 / JCM 20966 / LMG 6465 / NBRC 14845 / NCIMB 13405 / ORS 571), this protein is Cyclic amide hydrolase.